Reading from the N-terminus, the 773-residue chain is Kelch domain-containing protein 7A (773 aa).

The helical transmembrane segment at valine 23–tyrosine 40 threads the bilayer. Residue asparagine 61 is glycosylated (N-linked (GlcNAc...) asparagine). Disordered stretches follow at residues glutamate 64–serine 99 and serine 114–glycine 207. Serine 89 is subject to Phosphoserine. Residues serine 114–glutamine 126 show a composition bias toward basic and acidic residues. A glycan (N-linked (GlcNAc...) asparagine) is linked at asparagine 256. Positions lysine 296 to glycine 355 are disordered. Kelch repeat units follow at residues threonine 323–glutamate 370, lysine 488–leucine 534, tyrosine 537–glycine 585, histidine 586–cysteine 628, and glutamate 631–glycine 673. Low complexity predominate over residues serine 340–proline 354. Serine 361 carries the post-translational modification Phosphoserine.

It localises to the membrane. The protein is Kelch domain-containing protein 7A (Klhdc7a) of Mus musculus (Mouse).